We begin with the raw amino-acid sequence, 110 residues long: U1-lycotoxin-Ls1mm (110 aa).

Residues 1-20 (MKFVLLFGVLLVTLFSYSSA) form the signal peptide. Positions 21 to 44 (EMLDDFDQADEDELLSLIEKEEAR) are excised as a propeptide. 4 disulfide bridges follow: Cys47–Cys62, Cys54–Cys71, Cys61–Cys89, and Cys73–Cys87.

It belongs to the neurotoxin 19 (CSTX) family. 03 subfamily. As to expression, expressed by the venom gland.

The protein localises to the secreted. This is U1-lycotoxin-Ls1mm from Lycosa singoriensis (Wolf spider).